The sequence spans 417 residues: Methyltransferase/ribosomally synthesized cyclic peptide omphalotin A precursor ophMA (417 aa).

Positions 1 to 251 (METSTQTKAG…GVSTFYIPPK (251 aa)) are methyltransferase domain. Active-site residues include R72, Y76, and Y98. Y98, H100, V103, A130, Q172, A213, S244, and T245 together coordinate S-adenosyl-L-methionine. Residues 252-378 (ARKASNLDII…WAIRCAMKNM (127 aa)) are clasp domain. The interval 379-399 (PSSLLDAARESGEEASQNGFP) is precursor leader. V401, V403, and V404 each carry N-methylvaline. G405 bears the N-methylglycine mark. V406 is modified (N-methylvaline). I407 bears the N-methylisoleucine mark. The residue at position 408 (G408) is an N-methylglycine. Residue I410 is modified to N-methylisoleucine. G411 is modified (N-methylglycine). An N-methylvaline modification is found at V413.

This sequence in the N-terminal section; belongs to the precorrin methyltransferase family. In terms of assembly, homodimer. In terms of processing, ophMA automethylates at Val-401, Val-403, Val-404, Gly-405, Val-406, Ile-407, Gly-408, Ile-410, Gly-411 and Val-413 before being processed by the prolyloligopeptidase ophP which likely forms a peptidyl ester upon removal of the follower propeptide, which then undergoes macrocyclization with the N-terminus of the modified core peptide. Peptide backbone alpha-N-methylations change the physicochemical properties of amide bonds to provide structural constraints and other favorable characteristics including biological membrane permeability to peptides.

It participates in mycotoxin biosynthesis. In terms of biological role, fusion protein of the methyltransferase ophM and the omphalotin core peptide; part of the gene cluster that mediates the biosynthesis of omphalotin A, a highly methylated cyclic dodecapeptide with nematodicidal activity. Omphalotin A derives from the C-terminus of the ophMA protein, and it is the ophMA protein that methylates its own C-terminus using S-adenosyl methionine (SAM). The C-terminus is subsequently cleaved off and macrocyclized by the prolyloligopeptidase ophP to give the final product. The sequence is that of Methyltransferase/ribosomally synthesized cyclic peptide omphalotin A precursor ophMA from Omphalotus olearius (Jack o'lantern).